The primary structure comprises 363 residues: Anthranilate phosphoribosyltransferase (363 aa).

5-phospho-alpha-D-ribose 1-diphosphate is bound by residues Gly-85, 88 to 89 (GD), Thr-93, 95 to 98 (NVST), 113 to 121 (KHGNRALSS), and Ala-125. Position 85 (Gly-85) interacts with anthranilate. Ser-97 contributes to the Mg(2+) binding site. Asn-116 lines the anthranilate pocket. Arg-171 provides a ligand contact to anthranilate. Mg(2+) is bound by residues Asp-233 and Glu-234.

The protein belongs to the anthranilate phosphoribosyltransferase family. In terms of assembly, homodimer. Mg(2+) serves as cofactor.

The enzyme catalyses N-(5-phospho-beta-D-ribosyl)anthranilate + diphosphate = 5-phospho-alpha-D-ribose 1-diphosphate + anthranilate. It functions in the pathway amino-acid biosynthesis; L-tryptophan biosynthesis; L-tryptophan from chorismate: step 2/5. Its function is as follows. Catalyzes the transfer of the phosphoribosyl group of 5-phosphorylribose-1-pyrophosphate (PRPP) to anthranilate to yield N-(5'-phosphoribosyl)-anthranilate (PRA). The protein is Anthranilate phosphoribosyltransferase of Gluconobacter oxydans (strain 621H) (Gluconobacter suboxydans).